Here is a 260-residue protein sequence, read N- to C-terminus: Indole-3-glycerol phosphate synthase (260 aa).

It belongs to the TrpC family.

It carries out the reaction 1-(2-carboxyphenylamino)-1-deoxy-D-ribulose 5-phosphate + H(+) = (1S,2R)-1-C-(indol-3-yl)glycerol 3-phosphate + CO2 + H2O. It participates in amino-acid biosynthesis; L-tryptophan biosynthesis; L-tryptophan from chorismate: step 4/5. The protein is Indole-3-glycerol phosphate synthase of Neisseria gonorrhoeae (strain ATCC 700825 / FA 1090).